The sequence spans 363 residues: NAD(P)H-quinone oxidoreductase subunit 1, chloroplastic (363 aa).

7 helical membrane passes run 30–50 (LVPILTLVVGITIGVLVIVWL), 98–118 (FSIGPSMAVISILLSYSVIPF), 129–149 (VGVFLWIAISSIAPIGLLMSG), 165–185 (AAQSISYEIPLTLCVLSISLL), 253–273 (FAFFYITSYFNLLVSSLFVTI), 303–323 (TTTELFITLAKTFFFLFISIT), and 336–356 (LLNLGWKFLLPISLGNLLLTT).

The protein belongs to the complex I subunit 1 family. In terms of assembly, NDH is composed of at least 16 different subunits, 5 of which are encoded in the nucleus.

The protein resides in the plastid. Its subcellular location is the chloroplast thylakoid membrane. It catalyses the reaction a plastoquinone + NADH + (n+1) H(+)(in) = a plastoquinol + NAD(+) + n H(+)(out). The enzyme catalyses a plastoquinone + NADPH + (n+1) H(+)(in) = a plastoquinol + NADP(+) + n H(+)(out). NDH shuttles electrons from NAD(P)H:plastoquinone, via FMN and iron-sulfur (Fe-S) centers, to quinones in the photosynthetic chain and possibly in a chloroplast respiratory chain. The immediate electron acceptor for the enzyme in this species is believed to be plastoquinone. Couples the redox reaction to proton translocation, and thus conserves the redox energy in a proton gradient. The polypeptide is NAD(P)H-quinone oxidoreductase subunit 1, chloroplastic (Pelargonium hortorum (Common geranium)).